The sequence spans 131 residues: Methylglyoxal synthase (131 aa).

An MGS-like domain is found at 1 to 131; the sequence is MKIALIAHDK…GDLDYRKLRK (131 aa). Residues His-8, Lys-12, 34 to 37, and 54 to 55 contribute to the substrate site; these read TGTT and SG. Asp-60 serves as the catalytic Proton donor/acceptor. His-87 contributes to the substrate binding site.

Belongs to the methylglyoxal synthase family.

The enzyme catalyses dihydroxyacetone phosphate = methylglyoxal + phosphate. Its function is as follows. Catalyzes the formation of methylglyoxal from dihydroxyacetone phosphate. The sequence is that of Methylglyoxal synthase from Bacillus cereus (strain AH820).